A 257-amino-acid polypeptide reads, in one-letter code: Receptor expression-enhancing protein 4 (257 aa).

2 helical membrane-spanning segments follow: residues 1-21 (MVSWMICRLVVLIFGMLYPAY) and 42-62 (WIVFAIFMAAETFTDIFISWF). Residues Ser-152 and Ser-194 each carry the phosphoserine modification. Positions 159–257 (IPDTSAPTYQ…KKTIPSDLDS (99 aa)) are disordered. The residue at position 196 (Thr-196) is a Phosphothreonine. Phosphoserine is present on Ser-202. Residue Thr-250 is modified to Phosphothreonine. Residue Ser-253 is modified to Phosphoserine.

It belongs to the DP1 family.

It localises to the endoplasmic reticulum membrane. In terms of biological role, microtubule-binding protein required to ensure proper cell division and nuclear envelope reassembly by sequestering the endoplasmic reticulum away from chromosomes during mitosis. Probably acts by clearing the endoplasmic reticulum membrane from metaphase chromosomes. This chain is Receptor expression-enhancing protein 4 (Reep4), found in Rattus norvegicus (Rat).